The primary structure comprises 268 residues: Regulation of nuclear pre-mRNA domain-containing protein 1A (268 aa).

The region spanning 1 to 133 is the CID domain; the sequence is MSAFSEAALE…QLRQALYGDR (133 aa).

Belongs to the UPF0400 (RTT103) family. May form a heterodimer with RPRD1B. Associates with the RNA polymerase II subunit POLR2A (via CTD phosphorylated at 'Ser-2' and 'Ser-7' of the heptad repeats).

It is found in the nucleus. Interacts with phosphorylated C-terminal heptapeptide repeat domain (CTD) of the largest RNA polymerase II subunit POLR2A, and participates in dephosphorylation of the CTD by RPAP2. May act as a negative regulator of cyclin-D1 (CCND1) and cyclin-E (CCNE1) in the cell cycle. The sequence is that of Regulation of nuclear pre-mRNA domain-containing protein 1A (RPRD1A) from Gallus gallus (Chicken).